We begin with the raw amino-acid sequence, 157 residues long: Cyclic pyranopterin monophosphate synthase (157 aa).

Substrate contacts are provided by residues 74–76 (MCH) and 112–113 (ME). Asp127 is a catalytic residue.

This sequence belongs to the MoaC family. In terms of assembly, homohexamer; trimer of dimers.

It catalyses the reaction (8S)-3',8-cyclo-7,8-dihydroguanosine 5'-triphosphate = cyclic pyranopterin phosphate + diphosphate. It participates in cofactor biosynthesis; molybdopterin biosynthesis. Functionally, catalyzes the conversion of (8S)-3',8-cyclo-7,8-dihydroguanosine 5'-triphosphate to cyclic pyranopterin monophosphate (cPMP). The protein is Cyclic pyranopterin monophosphate synthase of Campylobacter lari (strain RM2100 / D67 / ATCC BAA-1060).